Consider the following 119-residue polypeptide: MKKSYRVKSEKDFNAIFNDKQSVANKRFVIYKLDKDQKHFRVGLSVSKKLGNAVVRNGIKRKIRHVLIEHRQELQAVDFVIIARKGVEELDYKETERNLLHVLKLAKIYQEGIPSEKEE.

This sequence belongs to the RnpA family. In terms of assembly, consists of a catalytic RNA component (M1 or rnpB) and a protein subunit.

It catalyses the reaction Endonucleolytic cleavage of RNA, removing 5'-extranucleotides from tRNA precursor.. Functionally, RNaseP catalyzes the removal of the 5'-leader sequence from pre-tRNA to produce the mature 5'-terminus. It can also cleave other RNA substrates such as 4.5S RNA. The protein component plays an auxiliary but essential role in vivo by binding to the 5'-leader sequence and broadening the substrate specificity of the ribozyme. This Streptococcus gordonii (strain Challis / ATCC 35105 / BCRC 15272 / CH1 / DL1 / V288) protein is Ribonuclease P protein component.